The primary structure comprises 1474 residues: SH3 and multiple ankyrin repeat domains protein 2 (1474 aa).

The span at leucine 66 to serine 76 shows a compositional bias: polar residues. Positions leucine 66–proline 125 are disordered. Residues valine 148–cysteine 207 enclose the SH3 domain. Glutamine 162 carries the phosphoserine modification. A PDZ domain is found at threonine 248–threonine 342. The residue at position 373 (serine 373) is a Phosphoserine. The tract at residues arginine 392–asparagine 413 is disordered. Serine 457 is subject to Phosphoserine. A Phosphothreonine modification is found at threonine 486. Residues leucine 504–cysteine 534 form a disordered region. The segment covering isoleucine 513 to proline 529 has biased composition (pro residues). Position 586 is a phosphoserine (serine 586). 3 disordered regions span residues threonine 659–lysine 920, proline 947–alanine 995, and proline 1057–aspartate 1153. The segment covering serine 666–serine 678 has biased composition (low complexity). A compositionally biased stretch (basic and acidic residues) spans valine 711–arginine 722. Position 724 is a phosphoserine (serine 724). The span at leucine 783 to glycine 795 shows a compositional bias: gly residues. Low complexity-rich tracts occupy residues proline 811–proline 823 and arginine 833–serine 846. Basic and acidic residues-rich tracts occupy residues alanine 847–leucine 868 and arginine 899–lysine 920. Residue threonine 903 is modified to Phosphothreonine. Positions serine 1075–threonine 1085 are enriched in polar residues. The span at valine 1119–glutamate 1130 shows a compositional bias: basic and acidic residues. Over residues threonine 1131–serine 1151 the composition is skewed to low complexity. The SH3-binding motif lies at proline 1169–proline 1175. 2 disordered regions span residues glutamate 1195–alanine 1216 and asparagine 1260–lysine 1401. A compositionally biased stretch (pro residues) spans isoleucine 1202–glycine 1212. A compositionally biased stretch (low complexity) spans serine 1291 to valine 1305. O-linked (GlcNAc) threonine glycosylation is present at threonine 1292. A compositionally biased stretch (polar residues) spans proline 1307–serine 1317. Serine 1334 and serine 1338 each carry phosphoserine. Low complexity-rich tracts occupy residues serine 1352–serine 1363 and arginine 1385–serine 1399. In terms of domain architecture, SAM spans tryptophan 1411–arginine 1474.

The protein belongs to the SHANK family. As to quaternary structure, is part of a complex with DLG4/PSD-95 and DLGAP1/GKAP. Interacts with CTTN/cortactin SH3 domain, DLGAP1/GKAP and alpha-latrotoxin receptor 1. Interacts with DNM2, DBNL, GRID2, BAIAP2, SLC9A3, PLCB3 and CFTR. Interacts with ABI1 (via SH3 domain). Interacts (via proline-rich region) with PDE4D isoform 5 (via N-terminal region). Interacts with PDE4D isoform 33, isoform 4, isoform 7, isoform 8 and isoform 9 but not isoform 32 and isoform 6. Interacts weakly with PDE4D isoform 31. Interacts with ABI1. Expressed in epithelial cells (at protein level). All isoforms except isoform 7 are expressed predominantly in brain, with highest levels in olfactory bulb, cerebral cortex, cerebellum, central gray matter and hippocampus. Moderate levels of expression are seen in the caudate putamen, thalamic nuclei and brain stem. In cerebellum primarily expressed in Purkinje cells. Isoform 7 is not expressed in brain but expressed in liver, cholangiocytes and thymus. Isoform 7 is present in pancreas, colonic mucosa and thymocytes (at protein level).

Its subcellular location is the apical cell membrane. It localises to the cytoplasm. It is found in the synapse. The protein localises to the postsynaptic density. The protein resides in the cell projection. Its subcellular location is the growth cone. It localises to the dendritic spine. In terms of biological role, seems to be an adapter protein in the postsynaptic density (PSD) of excitatory synapses that interconnects receptors of the postsynaptic membrane including NMDA-type and metabotropic glutamate receptors, and the actin-based cytoskeleton. May play a role in the structural and functional organization of the dendritic spine and synaptic junction. This chain is SH3 and multiple ankyrin repeat domains protein 2 (Shank2), found in Rattus norvegicus (Rat).